Reading from the N-terminus, the 179-residue chain is Putative 5'(3')-deoxyribonucleotidase (179 aa).

Catalysis depends on Asp9, which acts as the Nucleophile. Mg(2+)-binding residues include Asp9, Asp11, and Asp135. The active-site Proton donor is the Asp11.

It belongs to the 5'(3')-deoxyribonucleotidase family. It depends on Mg(2+) as a cofactor.

Functionally, dephosphorylates the 5' and 2'(3')-phosphates of deoxyribonucleotides. The polypeptide is Putative 5'(3')-deoxyribonucleotidase (Staphylococcus epidermidis (strain ATCC 12228 / FDA PCI 1200)).